The chain runs to 827 residues: Multiple RNA-binding domain-containing protein 1 (827 aa).

Residues 5-78 (SRIFVKNLPP…SRISVDIAKP (74 aa)) form the RRM 1 domain. 3 disordered regions span residues 77–116 (KPIADSKPQHKSPSKGSSKDADPKNAPKVLPPNTKVTAAA), 176–230 (AGLE…ATDD), and 256–299 (AASG…DPES). Positions 179-189 (EDGESDDEYED) are enriched in acidic residues. Composition is skewed to low complexity over residues 208–225 (APLAASAEPSESAPPVSL) and 256–270 (AASGSAAVSVPSTSV). Residues 277 to 288 (KPEEHPAEDSRE) show a composition bias toward basic and acidic residues. RRM domains follow at residues 308 to 384 (SRLF…PAAA), 489 to 560 (TTIL…KGPK), 599 to 682 (SSLF…ASHR), and 704 to 781 (TKLV…FAQA).

This sequence belongs to the RRM MRD1 family.

Its subcellular location is the nucleus. Its function is as follows. Involved in pre-rRNA processing. The protein is Multiple RNA-binding domain-containing protein 1 (mrd-1) of Neurospora crassa (strain ATCC 24698 / 74-OR23-1A / CBS 708.71 / DSM 1257 / FGSC 987).